Here is a 400-residue protein sequence, read N- to C-terminus: Argininosuccinate synthase (400 aa).

ATP contacts are provided by residues 11–19 and alanine 38; that span reads AYSGGLDTS. Tyrosine 89 and serine 94 together coordinate L-citrulline. Residue glycine 119 participates in ATP binding. 3 residues coordinate L-aspartate: threonine 121, asparagine 125, and aspartate 126. Asparagine 125 contacts L-citrulline. Residues arginine 129, serine 179, serine 188, glutamate 264, and tyrosine 276 each contribute to the L-citrulline site.

Belongs to the argininosuccinate synthase family. Type 1 subfamily. In terms of assembly, homotetramer.

The protein localises to the cytoplasm. The enzyme catalyses L-citrulline + L-aspartate + ATP = 2-(N(omega)-L-arginino)succinate + AMP + diphosphate + H(+). It functions in the pathway amino-acid biosynthesis; L-arginine biosynthesis; L-arginine from L-ornithine and carbamoyl phosphate: step 2/3. The chain is Argininosuccinate synthase from Oleidesulfovibrio alaskensis (strain ATCC BAA-1058 / DSM 17464 / G20) (Desulfovibrio alaskensis).